The following is an 899-amino-acid chain: DNA mismatch repair protein MutS (899 aa).

Residues 1-20 (MGLQKKTDPEQAQADSAASR) are disordered. 631–638 (GPNMGGKS) contributes to the ATP binding site. Residues 832–852 (PPTPDDDEDDFGAAPSAVPAP) form a disordered region. Low complexity predominate over residues 843–852 (GAAPSAVPAP).

The protein belongs to the DNA mismatch repair MutS family.

Its function is as follows. This protein is involved in the repair of mismatches in DNA. It is possible that it carries out the mismatch recognition step. This protein has a weak ATPase activity. The sequence is that of DNA mismatch repair protein MutS from Cupriavidus necator (strain ATCC 17699 / DSM 428 / KCTC 22496 / NCIMB 10442 / H16 / Stanier 337) (Ralstonia eutropha).